The sequence spans 245 residues: Probable 2-phosphosulfolactate phosphatase (245 aa).

The protein belongs to the ComB family. The cofactor is Mg(2+).

The enzyme catalyses (2R)-O-phospho-3-sulfolactate + H2O = (2R)-3-sulfolactate + phosphate. The protein is Probable 2-phosphosulfolactate phosphatase of Synechococcus sp. (strain RCC307).